Reading from the N-terminus, the 238-residue chain is Dolichyldiphosphatase 1 (238 aa).

Transmembrane regions (helical) follow at residues 33-53 (LAYLSLSPVVIIVGFVTLIIF), 100-120 (PSSHSQFMWFFSVYSFLFLYL), 130-150 (FLDLLWRHVLSLGLLTAAFLV), and 162-182 (WSQVLYGGVAGSLMAIAWFAF).

Belongs to the dolichyldiphosphatase family.

It is found in the endoplasmic reticulum membrane. The enzyme catalyses a di-trans,poly-cis-dolichyl diphosphate + H2O = a di-trans,poly-cis-dolichyl phosphate + phosphate + H(+). The protein operates within protein modification; protein glycosylation. Required for efficient N-glycosylation. Necessary for maintaining optimal levels of dolichol-linked oligosaccharides. Hydrolyzes dolichyl pyrophosphate at a very high rate and dolichyl monophosphate at a much lower rate. Does not act on phosphatidate. The protein is Dolichyldiphosphatase 1 (DOLPP1) of Rhinolophus ferrumequinum (Greater horseshoe bat).